The following is a 171-amino-acid chain: 3-hydroxydecanoyl-[acyl-carrier-protein] dehydratase (171 aa).

H70 is an active-site residue.

It belongs to the thioester dehydratase family. FabA subfamily. Homodimer.

It is found in the cytoplasm. The catalysed reaction is a (3R)-hydroxyacyl-[ACP] = a (2E)-enoyl-[ACP] + H2O. It catalyses the reaction (3R)-hydroxydecanoyl-[ACP] = (2E)-decenoyl-[ACP] + H2O. It carries out the reaction (2E)-decenoyl-[ACP] = (3Z)-decenoyl-[ACP]. It functions in the pathway lipid metabolism; fatty acid biosynthesis. In terms of biological role, necessary for the introduction of cis unsaturation into fatty acids. Catalyzes the dehydration of (3R)-3-hydroxydecanoyl-ACP to E-(2)-decenoyl-ACP and then its isomerization to Z-(3)-decenoyl-ACP. Can catalyze the dehydratase reaction for beta-hydroxyacyl-ACPs with saturated chain lengths up to 16:0, being most active on intermediate chain length. This Pseudomonas putida (strain GB-1) protein is 3-hydroxydecanoyl-[acyl-carrier-protein] dehydratase.